Reading from the N-terminus, the 2283-residue chain is Serine-rich adhesin for platelets (2283 aa).

Residues 1–89 (MSKRQKAFHD…VNMLHDQQAF (89 aa)) form the signal peptide. The serine-rich repeat region 1, SRR1 stretch occupies residues 90–230 (AASDAPLTSE…KTSTTSTSTA (141 aa)). Residues 100–111 (LNTQSETVGNQN) are compositionally biased toward polar residues. 3 disordered regions span residues 100–230 (LNTQ…TSTA), 691–721 (NSGN…GTPT), and 751–2255 (NSMS…GLLG). Residues 112–128 (STTIEASTSTADSTSVT) are compositionally biased toward low complexity. Residues 129–140 (KNSSSVQTSNSD) show a composition bias toward polar residues. Positions 149–229 (NVTSTTNSTS…NKTSTTSTST (81 aa)) are enriched in low complexity. The interval 231–751 (PVKLRTFSRL…TTFKYEVTRN (521 aa)) is non-repeat region (NRR). Low complexity-rich tracts occupy residues 752 to 1323 (SMSD…SDSI), 1330 to 1894 (SLSA…QSSS), and 1901 to 2225 (DSMS…SATS). A serine-rich repeat region 2, SRR2 region spans residues 752 to 2244 (SMSDSVSTSG…AQSEERLPDT (1493 aa)). The short motif at 2241–2245 (LPDTG) is the LPXTG sorting signal element. Threonine 2244 bears the Pentaglycyl murein peptidoglycan amidated threonine mark. Positions 2245–2283 (GESIKQNGLLGGIMTLLVGLGLMKRKKKKDENDQDDSQA) are cleaved as a propeptide — removed by sortase.

This sequence belongs to the serine-rich repeat protein (SRRP) family. Post-translationally, proteolytically cleaved by a metalloprotease. Glycosylated. It is probable that most of the Ser residues in SSR1 and SSR2 are O-GlcNAcylated. Sequential glycosylation by sugar transferases are able to generate complex sugar polymorphisms.

The protein resides in the secreted. Its subcellular location is the cell wall. Its function is as follows. Mediates binding to human platelets, possibly through a receptor-ligand interaction. Probably associated with virulence in endovascular infection. In Staphylococcus aureus, this protein is Serine-rich adhesin for platelets (sraP).